A 487-amino-acid chain; its full sequence is Probable UDP-N-acetylglucosamine pyrophosphorylase (487 aa).

Residues 105-108 (LAGG) carry the Substrate binding motif. UTP-binding positions include 105-108 (LAGG), Lys119, Gln198, and Gly225. A substrate-binding site is contributed by Asn226. A UTP-binding site is contributed by Asp256. The short motif at 307–308 (EY) is the Substrate binding element. Lys382 contributes to the UTP binding site. Position 412 (Lys412) interacts with substrate.

The protein belongs to the UDPGP type 1 family.

Its subcellular location is the cytoplasm. The enzyme catalyses N-acetyl-alpha-D-glucosamine 1-phosphate + UTP + H(+) = UDP-N-acetyl-alpha-D-glucosamine + diphosphate. It functions in the pathway nucleotide-sugar biosynthesis; UDP-N-acetyl-alpha-D-glucosamine biosynthesis; UDP-N-acetyl-alpha-D-glucosamine from N-acetyl-alpha-D-glucosamine 1-phosphate: step 1/1. This is Probable UDP-N-acetylglucosamine pyrophosphorylase (uap1) from Dictyostelium discoideum (Social amoeba).